The chain runs to 476 residues: Glutamate--tRNA ligase (476 aa).

Positions 8–18 (PSPTGTLHIGT) match the 'HIGH' region motif. The 'KMSKS' region motif lies at 247-251 (KLSKR). Lysine 250 is an ATP binding site.

Belongs to the class-I aminoacyl-tRNA synthetase family. Glutamate--tRNA ligase type 1 subfamily. In terms of assembly, monomer.

It is found in the cytoplasm. It catalyses the reaction tRNA(Glu) + L-glutamate + ATP = L-glutamyl-tRNA(Glu) + AMP + diphosphate. Catalyzes the attachment of glutamate to tRNA(Glu) in a two-step reaction: glutamate is first activated by ATP to form Glu-AMP and then transferred to the acceptor end of tRNA(Glu). The protein is Glutamate--tRNA ligase of Synechococcus sp. (strain WH7803).